The sequence spans 172 residues: L-amino acid oxidase (172 aa).

44 to 47 is a binding site for FAD; that stretch reads GPMR. Substrate contacts are provided by Arg-47 and His-103.

It belongs to the flavin monoamine oxidase family. FIG1 subfamily. As to quaternary structure, heterodimer; non-covalently linked. The cofactor is FAD. N-glycosylated. In terms of tissue distribution, expressed by the venom gland.

It localises to the secreted. It carries out the reaction an L-alpha-amino acid + O2 + H2O = a 2-oxocarboxylate + H2O2 + NH4(+). The catalysed reaction is L-leucine + O2 + H2O = 4-methyl-2-oxopentanoate + H2O2 + NH4(+). The enzyme catalyses L-phenylalanine + O2 + H2O = 3-phenylpyruvate + H2O2 + NH4(+). It catalyses the reaction L-tryptophan + O2 + H2O = indole-3-pyruvate + H2O2 + NH4(+). It carries out the reaction L-methionine + O2 + H2O = 4-methylsulfanyl-2-oxobutanoate + H2O2 + NH4(+). The catalysed reaction is L-isoleucine + O2 + H2O = (S)-3-methyl-2-oxopentanoate + H2O2 + NH4(+). The enzyme catalyses L-arginine + O2 + H2O = 5-guanidino-2-oxopentanoate + H2O2 + NH4(+). It catalyses the reaction L-tyrosine + O2 + H2O = 3-(4-hydroxyphenyl)pyruvate + H2O2 + NH4(+). With respect to regulation, activity is increased by Mn(2+) ions. Inhibited by Zn(2+), Ni(2+), Co(2+), Cu(2+) and Al(3+). No significant activity change by Na(+), K(+), Ca(2+), Mg(2+) and Ba(2+) ions. Both isoform are completely inhibited by L-Cys and reduced glutathione. O-phenanthroline, beta-mercaptoethanol and PMSF completely inhibit the enzymatic activity of LAAOII, but have no activity on LAAOI. Iodoacetic acid inhibits the enzymatic activity of LAAOII by 46% but has no effect on the LAAOI activity. Catalyzes an oxidative deamination of predominantly hydrophobic and aromatic L-amino acids, thus producing hydrogen peroxide that may contribute to the diverse toxic effects of this enzyme. Shows high specificity for L-Arg, L-Met, L-Phe, L-Leu, L-Tyr, L-Ile and L-Trp, low specificity for L-Val, L-Ala, L-Asn, L-Gln, and no specificity for L-Pro, L-Ser, L-Thr, L-Cys, L-Gly and L-Asp. Exhibits diverse biological activities, such as hemorrhage, hemolysis, edema, antibacterial and antiparasitic activities, as well as regulation of platelet aggregation. Its effect on platelets is controversial, since it either induces aggregation or inhibits agonist-induced aggregation. These different effects are probably due to different experimental conditions. The polypeptide is L-amino acid oxidase (Cerastes cerastes (Horned desert viper)).